The following is a 384-amino-acid chain: N-acetylneuraminate epimerase (384 aa).

An N-terminal signal peptide occupies residues 1–24 (MMKTKYLLLPLLASSSLLSHMAFA). Kelch repeat units lie at residues 46–90 (KVYV…TVVG), 92–145 (NIFV…YSPD), 147–184 (KQVLFFGGYSKPLFDKYLADITRTDKKAQPEQWQKIVD), 185–230 (DYMG…VIDG), 233–281 (ITLI…IAGA), 303–352 (AQFE…SVKG), and 354–383 (VLMVGGERADRTASTKVYLVGLNNNQIDIV). The Proton acceptor role is filled by E239.

This sequence belongs to the NanM family. Homodimer.

Its subcellular location is the periplasm. The enzyme catalyses N-acetyl-alpha-neuraminate = N-acetyl-beta-neuraminate. Its function is as follows. Converts alpha-N-acetylneuranimic acid (Neu5Ac) to the beta-anomer, accelerating the equilibrium between the alpha- and beta-anomers. Probably facilitates sialidase-negative bacteria to compete successfully for limited amounts of extracellular Neu5Ac, which is likely taken up in the beta-anomer. In addition, the rapid removal of sialic acid from solution might be advantageous to the bacterium to damp down host responses. In Vibrio vulnificus (strain YJ016), this protein is N-acetylneuraminate epimerase.